The following is a 239-amino-acid chain: DUP240 protein DFP3 (239 aa).

The Cytoplasmic segment spans residues 1-54 (MQPHLDNNSNNDDVKLDTLGEQNVLSSAENITLPEDTFKSYMTYLLYEMAHYKP). A helical membrane pass occupies residues 55 to 75 (MIFSFLALSVSILIVVIFHNV). The Extracellular segment spans residues 76-79 (KACD). A helical transmembrane segment spans residues 80-104 (VVFGFSIFVTSILFLSTLIPFNVYI). Over 105–239 (SDEGFRIKLL…RKQYPDADIP (135 aa)) the chain is Cytoplasmic.

The protein belongs to the DUP/COS family. In terms of assembly, interacts according to large scale protein interaction studies with MEC3 and ULP1.

The protein localises to the membrane. The polypeptide is DUP240 protein DFP3 (Saccharomyces cerevisiae (strain ATCC 204508 / S288c) (Baker's yeast)).